We begin with the raw amino-acid sequence, 175 residues long: Large ribosomal subunit protein uL10 (175 aa).

The protein belongs to the universal ribosomal protein uL10 family. As to quaternary structure, part of the ribosomal stalk of the 50S ribosomal subunit. The N-terminus interacts with L11 and the large rRNA to form the base of the stalk. The C-terminus forms an elongated spine to which L12 dimers bind in a sequential fashion forming a multimeric L10(L12)X complex.

Its function is as follows. Forms part of the ribosomal stalk, playing a central role in the interaction of the ribosome with GTP-bound translation factors. This chain is Large ribosomal subunit protein uL10, found in Prochlorococcus marinus (strain MIT 9301).